We begin with the raw amino-acid sequence, 1190 residues long: Laminin subunit gamma-2 (1190 aa).

Residues 1–21 (MPALWLRCGLCLALLLPAARA) form the signal peptide. Intrachain disulfides connect Cys-28–Cys-37, Cys-30–Cys-53, Cys-56–Cys-65, Cys-68–Cys-81, Cys-84–Cys-96, Cys-86–Cys-102, Cys-104–Cys-113, Cys-116–Cys-128, Cys-139–Cys-150, Cys-141–Cys-155, Cys-157–Cys-166, and Cys-169–Cys-184. Laminin EGF-like domains follow at residues 28–83 (CDCN…RCLP), 84–130 (CNCN…GCAQ), and 139–186 (CDCD…GCTQ). Residues 187–196 (CFCYGHSASC) form the Laminin EGF-like 4; first part domain. A Laminin IV type A domain is found at 213–381 (QDVDGWKAVQ…SGAPAPWVEQ (169 aa)). N-linked (GlcNAc...) asparagine glycosylation is found at Asn-342 and Asn-362. The Laminin EGF-like 4; second part domain occupies 382-415 (CVCPVGYKGQFCQDCASGYKRDSARLGPFGTCIP). Laminin EGF-like domains lie at 416–462 (CNCQ…SCKP), 463–517 (CPCR…PCQP), and 518–573 (CQCN…KCRA). 11 cysteine pairs are disulfide-bonded: Cys-463-Cys-471, Cys-465-Cys-482, Cys-485-Cys-494, Cys-497-Cys-515, Cys-518-Cys-532, Cys-520-Cys-539, Cys-542-Cys-551, Cys-554-Cys-571, Cys-574-Cys-586, Cys-576-Cys-592, and Cys-594-Cys-603. Residues 574–603 (CNCNPVGSEPVECRSDGSCVCKPGFGGLSC) form the Laminin EGF-like 8; truncated domain. The segment at 604–1190 (EHAALTSCPA…CYNTQALEQQ (587 aa)) is domain II and I. Positions 613 to 718 (ACYNQVKVQM…GSQYQNQVQD (106 aa)) form a coiled coil. An O-linked (Xyl...) (chondroitin sulfate) serine glycan is attached at Ser-803. Coiled coils occupy residues 809–1073 (AVVQ…AVQM) and 1114–1190 (EERL…LEQQ). N-linked (GlcNAc...) asparagine glycans are attached at residues Asn-939 and Asn-1030.

As to quaternary structure, laminin is a complex glycoprotein, consisting of three different polypeptide chains (alpha, beta, gamma), which are bound to each other by disulfide bonds into a cross-shaped molecule comprising one long and three short arms with globules at each end. Gamma-2 is a subunit of laminin-5 (laminin-332 or epiligrin/kalinin/nicein). Post-translationally, O-glycosylated; contains chondroitin sulfate (CS).

It localises to the secreted. The protein resides in the extracellular space. It is found in the extracellular matrix. Its subcellular location is the basement membrane. Its function is as follows. Binding to cells via a high affinity receptor, laminin is thought to mediate the attachment, migration and organization of cells into tissues during embryonic development by interacting with other extracellular matrix components. Ladsin exerts cell-scattering activity toward a wide variety of cells, including epithelial, endothelial, and fibroblastic cells. The protein is Laminin subunit gamma-2 (LAMC2) of Equus caballus (Horse).